Reading from the N-terminus, the 946-residue chain is Probable outer membrane protein pmp18 (946 aa).

An N-terminal signal peptide occupies residues 1 to 16 (MQNNRSLSKSSFFVGA). An Autotransporter domain is found at 668 to 946 (QGQIAPTASG…YLHAGTTFKF (279 aa)).

It belongs to the PMP outer membrane protein family.

Its subcellular location is the secreted. It localises to the cell wall. The protein resides in the cell outer membrane. This chain is Probable outer membrane protein pmp18 (pmp18), found in Chlamydia pneumoniae (Chlamydophila pneumoniae).